We begin with the raw amino-acid sequence, 194 residues long: FMN-dependent NADH:quinone oxidoreductase (194 aa).

FMN contacts are provided by residues Ser10, 16 to 18 (SQS), 91 to 94 (MYNF), and 135 to 138 (TRGG).

It belongs to the azoreductase type 1 family. Homodimer. The cofactor is FMN.

It catalyses the reaction 2 a quinone + NADH + H(+) = 2 a 1,4-benzosemiquinone + NAD(+). The enzyme catalyses N,N-dimethyl-1,4-phenylenediamine + anthranilate + 2 NAD(+) = 2-(4-dimethylaminophenyl)diazenylbenzoate + 2 NADH + 2 H(+). Its function is as follows. Quinone reductase that provides resistance to thiol-specific stress caused by electrophilic quinones. Also exhibits azoreductase activity. Catalyzes the reductive cleavage of the azo bond in aromatic azo compounds to the corresponding amines. The polypeptide is FMN-dependent NADH:quinone oxidoreductase (Vibrio parahaemolyticus serotype O3:K6 (strain RIMD 2210633)).